Here is a 492-residue protein sequence, read N- to C-terminus: Probable Xaa-Pro aminopeptidase ACLA_020440 (492 aa).

D272, D283, E421, and E460 together coordinate Mn(2+).

The protein belongs to the peptidase M24B family. It depends on Mn(2+) as a cofactor.

It catalyses the reaction Release of any N-terminal amino acid, including proline, that is linked to proline, even from a dipeptide or tripeptide.. Its function is as follows. Catalyzes the removal of a penultimate prolyl residue from the N-termini of peptides. The protein is Probable Xaa-Pro aminopeptidase ACLA_020440 of Aspergillus clavatus (strain ATCC 1007 / CBS 513.65 / DSM 816 / NCTC 3887 / NRRL 1 / QM 1276 / 107).